The chain runs to 172 residues: L-2,4-diaminobutyric acid acetyltransferase (172 aa).

Positions 15-166 (IVFDKPTVED…DEHEEELTFR (152 aa)) constitute an N-acetyltransferase domain.

The protein belongs to the acetyltransferase family. EctA subfamily.

It carries out the reaction L-2,4-diaminobutanoate + acetyl-CoA = (2S)-4-acetamido-2-aminobutanoate + CoA + H(+). It functions in the pathway amine and polyamine biosynthesis; ectoine biosynthesis; L-ectoine from L-aspartate 4-semialdehyde: step 2/3. Catalyzes the acetylation of L-2,4-diaminobutyrate (DABA) to gamma-N-acetyl-alpha,gamma-diaminobutyric acid (ADABA) with acetyl coenzyme A. The sequence is that of L-2,4-diaminobutyric acid acetyltransferase (ectA) from Marinococcus halophilus.